A 74-amino-acid chain; its full sequence is O-conotoxin GeXXXIA (74 aa).

A signal peptide spans 1 to 22 (MKLTCVLIITVLFLTACQLTTA). Residues 23 to 33 (VTYSRGEHKHR) constitute a propeptide that is removed on maturation.

Belongs to the conotoxin O1 superfamily. As to quaternary structure, homodimer; disulfide-linked. May contain 2 intrachain disulfide bonds and probably one interchain disulfide bond forming the homodimer. In terms of processing, the disulfide pairing is not important for activity towards the different nAChR subtypes, since this peptide without disulfide bond or with different disulfide bonds shows the same activity. As to expression, expressed by the venom duct.

The protein localises to the secreted. Its function is as follows. The activity of this natural homodimer has not been tested due to low abundance. The synthetic linear peptide has been refolded, giving 4 different monomeric isomers (m1 to m4) with 2 disulfide bonds each. All isomers potently inhibit rat alpha-1-beta-1-delta-epsilon/CHRNA1-CHRNB1-CHRND-CHRNE and human alpha-9-alpha-10/CHRNA9-CHRNA10 nicotinic acetylcholine receptors (nAChR). In addition, they show a modest inhibition at human alpha-3-beta-2/CHRNA3-CHRNB2, alpha-3-beta-4/CHRNA3-CHRNB4, alpha-7/CHRNA7, and alpha-4-beta-4/CHRNA4-CHRNB4. The synthetic monomer peptide without disulfide bonds shows a potent activity on alpha-9-alpha-10/CHRNA9 and CHRNA10 (IC(50)=16.2 nM). This linear peptide does not act as a competitive antagonist, or as a channel pore blocker of nAChR. The chain is O-conotoxin GeXXXIA from Conus generalis (General cone).